We begin with the raw amino-acid sequence, 395 residues long: 8-amino-7-oxononanoate synthase (395 aa).

Arg-24 contacts substrate. 111 to 112 (GF) lines the pyridoxal 5'-phosphate pocket. His-136 provides a ligand contact to substrate. Residues Ser-184, 209 to 212 (DDAH), and 240 to 243 (TLSK) each bind pyridoxal 5'-phosphate. Residue Lys-243 is modified to N6-(pyridoxal phosphate)lysine. Thr-357 contributes to the substrate binding site.

The protein belongs to the class-II pyridoxal-phosphate-dependent aminotransferase family. BioF subfamily. Homodimer. Requires pyridoxal 5'-phosphate as cofactor.

It catalyses the reaction 6-carboxyhexanoyl-[ACP] + L-alanine + H(+) = (8S)-8-amino-7-oxononanoate + holo-[ACP] + CO2. Its pathway is cofactor biosynthesis; biotin biosynthesis. In terms of biological role, catalyzes the decarboxylative condensation of pimeloyl-[acyl-carrier protein] and L-alanine to produce 8-amino-7-oxononanoate (AON), [acyl-carrier protein], and carbon dioxide. In Alkaliphilus oremlandii (strain OhILAs) (Clostridium oremlandii (strain OhILAs)), this protein is 8-amino-7-oxononanoate synthase.